Here is a 77-residue protein sequence, read N- to C-terminus: Probable Fe(2+)-trafficking protein (77 aa).

This sequence belongs to the Fe(2+)-trafficking protein family.

Could be a mediator in iron transactions between iron acquisition and iron-requiring processes, such as synthesis and/or repair of Fe-S clusters in biosynthetic enzymes. This is Probable Fe(2+)-trafficking protein from Baumannia cicadellinicola subsp. Homalodisca coagulata.